A 615-amino-acid chain; its full sequence is MRPAFEPAAGLGRAHPHETTPRSIDADVAIIGAGPVGLMIANILGLQGVRVVVVEKLTQIIDYPRAIGLDDEALRVFQSVGLAEALLPHTTPNHWMRFTLNGKCFASIEPRTDEFGWPRRNAFIQPLADQILYRGLERFDHVSTLLGHNVDRFAQDESGVTIDATDAHGVRTTIRAAYMVGADGGNSFVRRTLDVPFEGRTKPNQWIVIDVRNDPIGSPHVYLHCDARRPYVSAALPHGIRRFEFMVMPGETEEELSKPENMAALVRGVVDDPDKVDYIRQRVYTHNARLASVFRVKRILLAGDAAHIMPVWQGQGYNSGIRDASNLGWKLAMVVKGTARDALLDTYTMERRAHARSMIHLSEVAGDIFAPTSFVGTRVRDAFVRCFDVLPSLKRYFVEMRFKPMPRYEDGVVLLARRARSEGMLARLIASRGHGAFGRLVGLMSEKRESLLGRIVHGRDAQAGTPVGRMYIQPRVRVADGSIVRLDDAIGNRFAILSWGTDPTFGLTPEARRIWSALGGCFVLAKPDPQLGFRDDVPEDVIAIGDVDSRLRDWFARVPESVVLLRPDRFVAGMCSPQCVSECVSQLAQRLSLSVATGAQADDATFAPAAGLVGA.

Residues 1–20 (MRPAFEPAAGLGRAHPHETT) form a disordered region. FAD is bound by residues 27 to 56 (DVAI…VVEK) and 294 to 304 (FRVKRILLAGD).

The protein belongs to the PheA/TfdB FAD monooxygenase family. FAD serves as cofactor.

It carries out the reaction 3-(3-hydroxyphenyl)propanoate + NADH + O2 + H(+) = 3-(2,3-dihydroxyphenyl)propanoate + NAD(+) + H2O. It catalyses the reaction (2E)-3-(3-hydroxyphenyl)prop-2-enoate + NADH + O2 + H(+) = (2E)-3-(2,3-dihydroxyphenyl)prop-2-enoate + NAD(+) + H2O. It functions in the pathway aromatic compound metabolism; 3-phenylpropanoate degradation. In terms of biological role, catalyzes the insertion of one atom of molecular oxygen into position 2 of the phenyl ring of 3-(3-hydroxyphenyl)propionate (3-HPP) and hydroxycinnamic acid (3HCI). This is 3-(3-hydroxy-phenyl)propionate/3-hydroxycinnamic acid hydroxylase 1 from Burkholderia vietnamiensis (strain G4 / LMG 22486) (Burkholderia cepacia (strain R1808)).